A 336-amino-acid chain; its full sequence is Dihydroorotate dehydrogenase (quinone) (336 aa).

Residues 62-66 (AGLDK) and T86 each bind FMN. K66 contacts substrate. Residue 111–115 (NRMGF) coordinates substrate. N139 and N172 together coordinate FMN. N172 is a substrate binding site. Residue S175 is the Nucleophile of the active site. N177 is a substrate binding site. Positions 217 and 245 each coordinate FMN. 246–247 (NT) contributes to the substrate binding site. FMN is bound by residues G268, G297, and 318-319 (YS).

Belongs to the dihydroorotate dehydrogenase family. Type 2 subfamily. In terms of assembly, monomer. FMN is required as a cofactor.

The protein localises to the cell membrane. It carries out the reaction (S)-dihydroorotate + a quinone = orotate + a quinol. The protein operates within pyrimidine metabolism; UMP biosynthesis via de novo pathway; orotate from (S)-dihydroorotate (quinone route): step 1/1. Functionally, catalyzes the conversion of dihydroorotate to orotate with quinone as electron acceptor. In Klebsiella pneumoniae (strain 342), this protein is Dihydroorotate dehydrogenase (quinone).